A 209-amino-acid chain; its full sequence is Outer-membrane lipoprotein carrier protein (209 aa).

A signal peptide spans Met-1 to Ala-24.

Belongs to the LolA family. Monomer.

The protein localises to the periplasm. Functionally, participates in the translocation of lipoproteins from the inner membrane to the outer membrane. Only forms a complex with a lipoprotein if the residue after the N-terminal Cys is not an aspartate (The Asp acts as a targeting signal to indicate that the lipoprotein should stay in the inner membrane). The protein is Outer-membrane lipoprotein carrier protein of Bordetella avium (strain 197N).